The chain runs to 414 residues: Putative competence-damage inducible protein (414 aa).

It belongs to the CinA family.

This chain is Putative competence-damage inducible protein, found in Listeria monocytogenes serotype 4b (strain CLIP80459).